Here is a 160-residue protein sequence, read N- to C-terminus: Cyanate hydratase (160 aa).

Catalysis depends on residues Arg-100, Glu-103, and Ser-126.

It belongs to the cyanase family.

The enzyme catalyses cyanate + hydrogencarbonate + 3 H(+) = NH4(+) + 2 CO2. Functionally, catalyzes the reaction of cyanate with bicarbonate to produce ammonia and carbon dioxide. This is Cyanate hydratase from Arthroderma otae (strain ATCC MYA-4605 / CBS 113480) (Microsporum canis).